The primary structure comprises 423 residues: MKEIIARHKAGEHLGICSVCSAHPLVIESALLFDLNTDNKVLIEATSNQVNQFGGYTGMKPADFRDFVYGIAQEVGFPRERLILGGDHLGPNCWQNEPAAAAMEKSVELIKAYVAAGFSKIHLDASMSCADDPTPLDPMVVARRAAVLCKAAEGTANEEQKCHLTYVIGTEVPVPGGEASTIGSVHVTREVDAARTLETHQIAFRESGLEEALSRVIAIVVQPGVEFDHTQIIHYQPQAAQALSAWIKETPMVYEAHSTDYQTRQAYRALVRDHYAILKVGPALTFALREAIFALAQMENELISPEQRSRVLEVIDEVMLNEPGYWKKYYRPTWSQAMVDIHFSLSDRIRYYWPHPRIRQSVEKLIANLNNVTLPLGLISQFMPVQFERLSEGVLTPTPHNLIIDKIQDVLRAYRFGCTPDVA.

It belongs to the GatZ/KbaZ family. GatZ subfamily. Forms a complex with GatY.

The protein operates within carbohydrate metabolism; D-tagatose 6-phosphate degradation; D-glyceraldehyde 3-phosphate and glycerone phosphate from D-tagatose 6-phosphate: step 2/2. Its function is as follows. Component of the tagatose-1,6-bisphosphate aldolase GatYZ that is required for full activity and stability of the Y subunit. Could have a chaperone-like function for the proper and stable folding of GatY. When expressed alone, GatZ does not show any aldolase activity. Is involved in the catabolism of galactitol. This is D-tagatose-1,6-bisphosphate aldolase subunit GatZ from Salmonella typhimurium (strain LT2 / SGSC1412 / ATCC 700720).